The sequence spans 188 residues: Sec-independent protein translocase protein TatB (188 aa).

Residues 1–21 (MFDIGWSELVVIGVVALVAIG) traverse the membrane as a helical segment. A disordered region spans residues 147–188 (LPVPAETHALATTDLAPPDLAHPAPAHPEPTNSEPAKDAKAS). The segment covering 160–170 (DLAPPDLAHPA) has biased composition (low complexity).

Belongs to the TatB family. In terms of assembly, the Tat system comprises two distinct complexes: a TatABC complex, containing multiple copies of TatA, TatB and TatC subunits, and a separate TatA complex, containing only TatA subunits. Substrates initially bind to the TatABC complex, which probably triggers association of the separate TatA complex to form the active translocon.

The protein localises to the cell inner membrane. Part of the twin-arginine translocation (Tat) system that transports large folded proteins containing a characteristic twin-arginine motif in their signal peptide across membranes. Together with TatC, TatB is part of a receptor directly interacting with Tat signal peptides. TatB may form an oligomeric binding site that transiently accommodates folded Tat precursor proteins before their translocation. The polypeptide is Sec-independent protein translocase protein TatB (Rhodopseudomonas palustris (strain HaA2)).